The primary structure comprises 603 residues: Phosphoribosylformylglycinamidine synthase subunit PurL (603 aa).

H32 is a catalytic residue. 2 residues coordinate ATP: Y35 and K68. Residue E70 participates in Mg(2+) binding. Substrate contacts are provided by residues S71–H74 and R93. H72 functions as the Proton acceptor in the catalytic mechanism. D94 contributes to the Mg(2+) binding site. Residues D107 and G136–R139 each bind ATP. Residues G189 and Q208 each contribute to the substrate site. D236 is a binding site for Mg(2+). E280 to Q282 is a binding site for substrate. Positions 388, 429, 442, and 477 each coordinate ATP. A Mg(2+)-binding site is contributed by N478. Position 480 (S480) interacts with substrate. Positions 549 and 556 each coordinate ATP.

The protein belongs to the FGAMS family. In terms of assembly, monomer. Part of the FGAM synthase complex composed of 1 PurL, 1 PurQ and 2 PurS subunits.

The protein resides in the cytoplasm. The enzyme catalyses N(2)-formyl-N(1)-(5-phospho-beta-D-ribosyl)glycinamide + L-glutamine + ATP + H2O = 2-formamido-N(1)-(5-O-phospho-beta-D-ribosyl)acetamidine + L-glutamate + ADP + phosphate + H(+). Its pathway is purine metabolism; IMP biosynthesis via de novo pathway; 5-amino-1-(5-phospho-D-ribosyl)imidazole from N(2)-formyl-N(1)-(5-phospho-D-ribosyl)glycinamide: step 1/2. Part of the phosphoribosylformylglycinamidine synthase complex involved in the purines biosynthetic pathway. Catalyzes the ATP-dependent conversion of formylglycinamide ribonucleotide (FGAR) and glutamine to yield formylglycinamidine ribonucleotide (FGAM) and glutamate. The FGAM synthase complex is composed of three subunits. PurQ produces an ammonia molecule by converting glutamine to glutamate. PurL transfers the ammonia molecule to FGAR to form FGAM in an ATP-dependent manner. PurS interacts with PurQ and PurL and is thought to assist in the transfer of the ammonia molecule from PurQ to PurL. The polypeptide is Phosphoribosylformylglycinamidine synthase subunit PurL (Thermotoga maritima (strain ATCC 43589 / DSM 3109 / JCM 10099 / NBRC 100826 / MSB8)).